The following is a 270-amino-acid chain: Probable septum site-determining protein MinC (270 aa).

This sequence belongs to the MinC family. In terms of assembly, interacts with MinD and FtsZ.

Functionally, cell division inhibitor that blocks the formation of polar Z ring septums. Rapidly oscillates between the poles of the cell to destabilize FtsZ filaments that have formed before they mature into polar Z rings. Prevents FtsZ polymerization. The chain is Probable septum site-determining protein MinC from Cupriavidus necator (strain ATCC 17699 / DSM 428 / KCTC 22496 / NCIMB 10442 / H16 / Stanier 337) (Ralstonia eutropha).